Consider the following 324-residue polypeptide: Acetyl-coenzyme A carboxylase carboxyl transferase subunit alpha (324 aa).

In terms of domain architecture, CoA carboxyltransferase C-terminal spans 44 to 298; it reads RFQNQLVKLQ…KKELTEQLDS (255 aa).

It belongs to the AccA family. Acetyl-CoA carboxylase is a heterohexamer composed of biotin carboxyl carrier protein (accB), biotin carboxylase (accC) and two subunits each of ACCase subunit alpha (accA) and ACCase subunit beta (accD).

The protein resides in the plastid. The protein localises to the chloroplast. The enzyme catalyses N(6)-carboxybiotinyl-L-lysyl-[protein] + acetyl-CoA = N(6)-biotinyl-L-lysyl-[protein] + malonyl-CoA. It participates in lipid metabolism; malonyl-CoA biosynthesis; malonyl-CoA from acetyl-CoA: step 1/1. In terms of biological role, component of the acetyl coenzyme A carboxylase (ACC) complex. First, biotin carboxylase catalyzes the carboxylation of biotin on its carrier protein (BCCP) and then the CO(2) group is transferred by the carboxyltransferase to acetyl-CoA to form malonyl-CoA. In Pyropia yezoensis (Susabi-nori), this protein is Acetyl-coenzyme A carboxylase carboxyl transferase subunit alpha.